The chain runs to 161 residues: 3-isopropylmalate dehydratase small subunit (161 aa).

Belongs to the LeuD family. LeuD type 2 subfamily. Heterodimer of LeuC and LeuD.

It catalyses the reaction (2R,3S)-3-isopropylmalate = (2S)-2-isopropylmalate. Its pathway is amino-acid biosynthesis; L-leucine biosynthesis; L-leucine from 3-methyl-2-oxobutanoate: step 2/4. Catalyzes the isomerization between 2-isopropylmalate and 3-isopropylmalate, via the formation of 2-isopropylmaleate. The polypeptide is 3-isopropylmalate dehydratase small subunit (Clostridium botulinum (strain Eklund 17B / Type B)).